We begin with the raw amino-acid sequence, 395 residues long: F-box only protein 7 (395 aa).

The F-box domain maps to asparagine 19–isoleucine 70.

The protein is F-box only protein 7 (FBX7) of Arabidopsis thaliana (Mouse-ear cress).